The chain runs to 480 residues: tRNA-2-methylthio-N(6)-dimethylallyladenosine synthase (480 aa).

The 117-residue stretch at 2–118 (NRVHIKTYGC…VPGYLDNLRA (117 aa)) folds into the MTTase N-terminal domain. [4Fe-4S] cluster contacts are provided by Cys-11, Cys-47, and Cys-81. The interval 145 to 169 (DHLLPQDSDSDSQPSTLNSQLRGAA) is disordered. Residues 149–159 (PQDSDSDSQPS) show a composition bias toward low complexity. A Radical SAM core domain is found at 171–405 (PPPQITAFVS…LELLRQNSER (235 aa)). Residues Cys-185, Cys-189, and Cys-192 each coordinate [4Fe-4S] cluster. In terms of domain architecture, TRAM spans 408–470 (ALLLDTVEEV…VSTLYGELML (63 aa)).

It belongs to the methylthiotransferase family. MiaB subfamily. In terms of assembly, monomer. [4Fe-4S] cluster serves as cofactor.

It localises to the cytoplasm. The catalysed reaction is N(6)-dimethylallyladenosine(37) in tRNA + (sulfur carrier)-SH + AH2 + 2 S-adenosyl-L-methionine = 2-methylsulfanyl-N(6)-dimethylallyladenosine(37) in tRNA + (sulfur carrier)-H + 5'-deoxyadenosine + L-methionine + A + S-adenosyl-L-homocysteine + 2 H(+). Its function is as follows. Catalyzes the methylthiolation of N6-(dimethylallyl)adenosine (i(6)A), leading to the formation of 2-methylthio-N6-(dimethylallyl)adenosine (ms(2)i(6)A) at position 37 in tRNAs that read codons beginning with uridine. The sequence is that of tRNA-2-methylthio-N(6)-dimethylallyladenosine synthase from Opitutus terrae (strain DSM 11246 / JCM 15787 / PB90-1).